The primary structure comprises 318 residues: NADH-ubiquinone oxidoreductase chain 1 (318 aa).

Transmembrane regions (helical) follow at residues 2–22, 70–90, 102–122, 147–167, 171–191, 222–242, 253–273, and 294–314; these read FLTN…FLTL, MFLM…IPLP, LLFM…SGWA, AIIL…TLII, YMWL…STLA, LFFL…TILF, ELYT…FLWI, and LPLT…TAAI.

The protein belongs to the complex I subunit 1 family.

It localises to the mitochondrion inner membrane. The enzyme catalyses a ubiquinone + NADH + 5 H(+)(in) = a ubiquinol + NAD(+) + 4 H(+)(out). Core subunit of the mitochondrial membrane respiratory chain NADH dehydrogenase (Complex I) that is believed to belong to the minimal assembly required for catalysis. Complex I functions in the transfer of electrons from NADH to the respiratory chain. The immediate electron acceptor for the enzyme is believed to be ubiquinone. The polypeptide is NADH-ubiquinone oxidoreductase chain 1 (MT-ND1) (Diaemus youngi (White-winged vampire bat)).